A 327-amino-acid chain; its full sequence is ATPase ASNA1 homolog (327 aa).

Residue Lys-26–Thr-33 participates in ATP binding. Asp-57 is an active-site residue. Positions 238 and 265 each coordinate ATP. Residues Cys-274 and Cys-277 each coordinate Zn(2+).

It belongs to the arsA ATPase family. Homodimer.

The protein localises to the cytoplasm. Its subcellular location is the endoplasmic reticulum. ATPase required for the post-translational delivery of tail-anchored (TA) proteins to the endoplasmic reticulum. Recognizes and selectively binds the transmembrane domain of TA proteins in the cytosol. This complex then targets to the endoplasmic reticulum by membrane-bound receptors, where the tail-anchored protein is released for insertion. This process is regulated by ATP binding and hydrolysis. ATP binding drives the homodimer towards the closed dimer state, facilitating recognition of newly synthesized TA membrane proteins. ATP hydrolysis is required for insertion. Subsequently, the homodimer reverts towards the open dimer state, lowering its affinity for the membrane-bound receptor, and returning it to the cytosol to initiate a new round of targeting. The protein is ATPase ASNA1 homolog of Entamoeba histolytica (strain ATCC 30459 / HM-1:IMSS / ABRM).